Here is a 529-residue protein sequence, read N- to C-terminus: Glucose-6-phosphate isomerase (529 aa).

The active-site Proton donor is glutamate 322. Active-site residues include histidine 351 and lysine 455.

It belongs to the GPI family.

It is found in the cytoplasm. It carries out the reaction alpha-D-glucose 6-phosphate = beta-D-fructose 6-phosphate. It functions in the pathway carbohydrate biosynthesis; gluconeogenesis. Its pathway is carbohydrate degradation; glycolysis; D-glyceraldehyde 3-phosphate and glycerone phosphate from D-glucose: step 2/4. Catalyzes the reversible isomerization of glucose-6-phosphate to fructose-6-phosphate. The polypeptide is Glucose-6-phosphate isomerase (Thermosynechococcus vestitus (strain NIES-2133 / IAM M-273 / BP-1)).